The following is a 225-amino-acid chain: UPF0758 protein XCV4028 (225 aa).

Positions 102–224 (ALSDPPSVGR…PVSFAERGWL (123 aa)) constitute an MPN domain. Histidine 173, histidine 175, and aspartate 186 together coordinate Zn(2+). Residues 173-186 (HNHPSGNPEPSEAD) carry the JAMM motif motif.

Belongs to the UPF0758 family.

This chain is UPF0758 protein XCV4028, found in Xanthomonas euvesicatoria pv. vesicatoria (strain 85-10) (Xanthomonas campestris pv. vesicatoria).